A 298-amino-acid chain; its full sequence is Glutamyl-Q tRNA(Asp) synthetase (298 aa).

L-glutamate-binding positions include 8–12 and Glu-44; that span reads RFAPS. The 'HIGH' region signature appears at 11 to 21; the sequence is PSPTGPLHFGS. Zn(2+) is bound by residues Cys-100, Cys-102, Tyr-123, and Cys-127. Positions 183 and 201 each coordinate L-glutamate. The 'KMSKS' region motif lies at 239 to 243; the sequence is KLSKQ. Lys-242 serves as a coordination point for ATP.

Belongs to the class-I aminoacyl-tRNA synthetase family. GluQ subfamily. It depends on Zn(2+) as a cofactor.

In terms of biological role, catalyzes the tRNA-independent activation of glutamate in presence of ATP and the subsequent transfer of glutamate onto a tRNA(Asp). Glutamate is transferred on the 2-amino-5-(4,5-dihydroxy-2-cyclopenten-1-yl) moiety of the queuosine in the wobble position of the QUC anticodon. The chain is Glutamyl-Q tRNA(Asp) synthetase from Burkholderia orbicola (strain AU 1054).